Here is a 275-residue protein sequence, read N- to C-terminus: MAIRKIGIASRCDRPEVLQMVRDIIAHFYSKVQIYVSTATADVLDIEGTPVERMRDKGVELIISVGGDGTVLRNIAKMKDPLPVLGINMGTLGFLVDVEPEDAIETIEEVLYGFSYLERMRVDVFLNGEMLETATNEVAVMSAKPAKIIQFEVYVNDCLLDEMRADGVVFATPTGSTAYAMSAGGPIINPRVNAIVVVPVAPFKLSARPWVIPSDSEITVKLSDHKKEAVIAIDGQKSYRIRPDDVVKLKKSKYPARFVRISDTCFYERVQRKLS.

Asp-68 functions as the Proton acceptor in the catalytic mechanism. Residues 68–69 (DG), Arg-73, 136–137 (NE), Lys-147, Arg-164, Asp-166, 177–182 (TAYAMS), Ala-201, and Gln-236 contribute to the NAD(+) site.

The protein belongs to the NAD kinase family. The cofactor is a divalent metal cation.

It localises to the cytoplasm. It catalyses the reaction NAD(+) + ATP = ADP + NADP(+) + H(+). Functionally, involved in the regulation of the intracellular balance of NAD and NADP, and is a key enzyme in the biosynthesis of NADP. Catalyzes specifically the phosphorylation on 2'-hydroxyl of the adenosine moiety of NAD to yield NADP. In Methanosarcina acetivorans (strain ATCC 35395 / DSM 2834 / JCM 12185 / C2A), this protein is NAD kinase.